The chain runs to 212 residues: Protein G1-like7 (212 aa).

The span at 1 to 22 (MDPSGPGPSSAAAGGAPAVAAA) shows a compositional bias: low complexity. Disordered stretches follow at residues 1–34 (MDPSGPGPSSAAAGGAPAVAAAPQPPAQLSRYES) and 148–212 (KARG…PSAS). The region spanning 31–158 (RYESQKRRDW…ARGIPYEKKK (128 aa)) is the ALOG domain. A Nuclear localization signal motif is present at residues 156-160 (KKKRK). Over residues 173-182 (SGSSSAAAAA) the composition is skewed to low complexity. Positions 183–194 (AGGGDTGSGGGA) are enriched in gly residues.

This sequence belongs to the plant homeotic and developmental regulators ALOG protein family.

It localises to the nucleus. Functionally, probable transcription regulator that acts as a developmental regulator by promoting cell growth in response to light. This is Protein G1-like7 from Oryza sativa subsp. indica (Rice).